Reading from the N-terminus, the 59-residue chain is uncharacterized protein (59 aa).

A helical membrane pass occupies residues 7-24 (FLLVFIILAQLLSCTPSA).

The protein resides in the membrane. This is an uncharacterized protein from Rickettsia prowazekii (strain Madrid E).